Reading from the N-terminus, the 214-residue chain is ATP phosphoribosyltransferase (214 aa).

Belongs to the ATP phosphoribosyltransferase family. Short subfamily. Heteromultimer composed of HisG and HisZ subunits.

Its subcellular location is the cytoplasm. It catalyses the reaction 1-(5-phospho-beta-D-ribosyl)-ATP + diphosphate = 5-phospho-alpha-D-ribose 1-diphosphate + ATP. Its pathway is amino-acid biosynthesis; L-histidine biosynthesis; L-histidine from 5-phospho-alpha-D-ribose 1-diphosphate: step 1/9. Functionally, catalyzes the condensation of ATP and 5-phosphoribose 1-diphosphate to form N'-(5'-phosphoribosyl)-ATP (PR-ATP). Has a crucial role in the pathway because the rate of histidine biosynthesis seems to be controlled primarily by regulation of HisG enzymatic activity. This is ATP phosphoribosyltransferase from Streptococcus gordonii (strain Challis / ATCC 35105 / BCRC 15272 / CH1 / DL1 / V288).